The chain runs to 496 residues: Pup--protein ligase (496 aa).

Glu30 is a Mg(2+) binding site. Arg73 is a binding site for ATP. Tyr75 is a Mg(2+) binding site. Asp77 (proton acceptor) is an active-site residue. Glu83 provides a ligand contact to Mg(2+). Positions 86 and 450 each coordinate ATP.

It belongs to the Pup ligase/Pup deamidase family. Pup-conjugating enzyme subfamily.

The enzyme catalyses ATP + [prokaryotic ubiquitin-like protein]-L-glutamate + [protein]-L-lysine = ADP + phosphate + N(6)-([prokaryotic ubiquitin-like protein]-gamma-L-glutamyl)-[protein]-L-lysine.. It functions in the pathway protein degradation; proteasomal Pup-dependent pathway. Its pathway is protein modification; protein pupylation. In terms of biological role, catalyzes the covalent attachment of the prokaryotic ubiquitin-like protein modifier Pup to the proteasomal substrate proteins, thereby targeting them for proteasomal degradation. This tagging system is termed pupylation. The ligation reaction involves the side-chain carboxylate of the C-terminal glutamate of Pup and the side-chain amino group of a substrate lysine. The sequence is that of Pup--protein ligase from Bifidobacterium animalis subsp. lactis (strain AD011).